Reading from the N-terminus, the 249-residue chain is Triosephosphate isomerase (249 aa).

9–11 (NWK) contributes to the substrate binding site. Residue H94 is the Electrophile of the active site. The active-site Proton acceptor is the E166. Substrate contacts are provided by residues G172, S211, and 232–233 (GG).

The protein belongs to the triosephosphate isomerase family. As to quaternary structure, homodimer.

It is found in the cytoplasm. The enzyme catalyses D-glyceraldehyde 3-phosphate = dihydroxyacetone phosphate. It participates in carbohydrate biosynthesis; gluconeogenesis. The protein operates within carbohydrate degradation; glycolysis; D-glyceraldehyde 3-phosphate from glycerone phosphate: step 1/1. Functionally, involved in the gluconeogenesis. Catalyzes stereospecifically the conversion of dihydroxyacetone phosphate (DHAP) to D-glyceraldehyde-3-phosphate (G3P). This is Triosephosphate isomerase from Moorella thermoacetica (strain ATCC 39073 / JCM 9320).